Reading from the N-terminus, the 563-residue chain is Chaperonin GroEL 1 (563 aa).

Residues 29 to 32 (TIGP), 86 to 90 (DGTTT), Gly413, and Asp492 each bind ATP. Residues 520–541 (DKPEPPSAPGAEGGDPMGGMGG) are disordered. Gly residues predominate over residues 530–541 (AEGGDPMGGMGG).

This sequence belongs to the chaperonin (HSP60) family. As to quaternary structure, forms a cylinder of 14 subunits composed of two heptameric rings stacked back-to-back. Interacts with the co-chaperonin GroES.

Its subcellular location is the cytoplasm. It catalyses the reaction ATP + H2O + a folded polypeptide = ADP + phosphate + an unfolded polypeptide.. In terms of biological role, together with its co-chaperonin GroES, plays an essential role in assisting protein folding. The GroEL-GroES system forms a nano-cage that allows encapsulation of the non-native substrate proteins and provides a physical environment optimized to promote and accelerate protein folding. This is Chaperonin GroEL 1 from Prochlorococcus marinus (strain NATL1A).